The primary structure comprises 307 residues: 4-hydroxy-tetrahydrodipicolinate synthase (307 aa).

Position 49 (Thr-49) interacts with pyruvate. Tyr-138 functions as the Proton donor/acceptor in the catalytic mechanism. The active-site Schiff-base intermediate with substrate is the Lys-166. Ile-207 provides a ligand contact to pyruvate.

It belongs to the DapA family. As to quaternary structure, homotetramer; dimer of dimers.

The protein localises to the cytoplasm. It carries out the reaction L-aspartate 4-semialdehyde + pyruvate = (2S,4S)-4-hydroxy-2,3,4,5-tetrahydrodipicolinate + H2O + H(+). It functions in the pathway amino-acid biosynthesis; L-lysine biosynthesis via DAP pathway; (S)-tetrahydrodipicolinate from L-aspartate: step 3/4. Catalyzes the condensation of (S)-aspartate-beta-semialdehyde [(S)-ASA] and pyruvate to 4-hydroxy-tetrahydrodipicolinate (HTPA). This chain is 4-hydroxy-tetrahydrodipicolinate synthase, found in Limosilactobacillus reuteri (strain DSM 20016) (Lactobacillus reuteri).